A 244-amino-acid chain; its full sequence is Fumarate reductase iron-sulfur subunit (244 aa).

Y14 contacts a menaquinone. The 82-residue stretch at 16–97 (PEVDTAPHSA…GMKVEALANF (82 aa)) folds into the 2Fe-2S ferredoxin-type domain. The [2Fe-2S] cluster site is built by C58, C63, C66, and C78. Residues 140–169 (MAKYHQFSGCINCGLCYAACPQFGLNPEFI) enclose the 4Fe-4S ferredoxin-type domain. Positions 149, 152, and 155 each coordinate [4Fe-4S] cluster. Positions 159, 205, and 211 each coordinate [3Fe-4S] cluster. Residue C215 participates in [4Fe-4S] cluster binding. 226 to 229 (QQGK) provides a ligand contact to a menaquinone.

The protein belongs to the succinate dehydrogenase/fumarate reductase iron-sulfur protein family. Fumarate dehydrogenase forms part of an enzyme complex containing four subunits: a flavoprotein, an iron-sulfur, and two hydrophobic anchor proteins. The cofactor is [2Fe-2S] cluster. Requires [3Fe-4S] cluster as cofactor. It depends on [4Fe-4S] cluster as a cofactor.

It is found in the cell inner membrane. The enzyme catalyses a quinone + succinate = fumarate + a quinol. It catalyses the reaction a menaquinone + succinate = a menaquinol + fumarate. Functionally, two distinct, membrane-bound, FAD-containing enzymes are responsible for the catalysis of fumarate and succinate interconversion; the fumarate reductase is used in anaerobic growth, and the succinate dehydrogenase is used in aerobic growth. The sequence is that of Fumarate reductase iron-sulfur subunit (frdB) from Escherichia coli O157:H7.